We begin with the raw amino-acid sequence, 151 residues long: 3-hydroxyacyl-[acyl-carrier-protein] dehydratase FabZ (151 aa).

The active site involves His-54.

The protein belongs to the thioester dehydratase family. FabZ subfamily.

Its subcellular location is the cytoplasm. The enzyme catalyses a (3R)-hydroxyacyl-[ACP] = a (2E)-enoyl-[ACP] + H2O. Its function is as follows. Involved in unsaturated fatty acids biosynthesis. Catalyzes the dehydration of short chain beta-hydroxyacyl-ACPs and long chain saturated and unsaturated beta-hydroxyacyl-ACPs. In Salmonella agona (strain SL483), this protein is 3-hydroxyacyl-[acyl-carrier-protein] dehydratase FabZ.